Here is a 946-residue protein sequence, read N- to C-terminus: Villin-4 (946 aa).

4 Gelsolin-like repeats span residues 28-109, 152-219, 274-339, and 641-715; these read NFKP…ETEK, VHVK…EDGK, LEHE…TIMF, and EIHH…PQFF. 3 disordered regions span residues 744 to 789, 801 to 832, and 844 to 902; these read ATPS…GRSP, PSTR…SSKQ, and GPTK…PAPD. Polar residues predominate over residues 765–777; that stretch reads QDKSQQRTRSMSH. Residues 874–883 show a composition bias toward acidic residues; sequence SENEPEDDEN. Residues 881–946 enclose the HP domain; it reads DENSTIYPYE…NRLKSDLQLF (66 aa).

The protein belongs to the villin/gelsolin family.

The protein resides in the cytoplasm. The protein localises to the cytoskeleton. Functionally, ca(2+)-regulated actin-binding protein. Binds actin microfilaments (MFs). Involved in actin filament bundling, severing and capping. Caps the barbed end of actin filaments and is able to sever them in a calcium-dependent manner. The polypeptide is Villin-4 (Oryza sativa subsp. japonica (Rice)).